The chain runs to 423 residues: Calcium up-regulated protein A (423 aa).

Basic and acidic residues predominate over residues 1-19 (MINIEDISKSSNESEEKQL). The segment at 1–27 (MINIEDISKSSNESEEKQLKSTSTSSK) is disordered. 2 Ricin B-type lectin domains span residues 27 to 147 (KPKY…WTTF) and 118 to 251 (QGNG…WGIN).

Belongs to the cup family.

Its subcellular location is the cytoplasm. It is found in the membrane. Its function is as follows. May play an important role in stabilizing and/or regulating the cell membrane during Ca(2+) stress or certain stages of development. In Dictyostelium discoideum (Social amoeba), this protein is Calcium up-regulated protein A (cupA).